Here is a 377-residue protein sequence, read N- to C-terminus: Phosphatidylserine decarboxylase proenzyme, mitochondrial (377 aa).

A mitochondrion-targeting transit peptide spans 1 to 34 (MMPLFNVLRSARMLPAVSKKVVSPPMMLRSVREL). Over 35-61 (TNQSKNVYATKEVIIGASQKKKRSWVK) the chain is Mitochondrial matrix. Residues 62-80 (WLSVSTLIIGGASYVGYLF) traverse the membrane as a helical segment. Residues 81–377 (TPDWREIVDS…YGQSLVADGV (297 aa)) lie on the Mitochondrial intermembrane side of the membrane. Residues aspartate 181, histidine 238, and serine 344 each act as charge relay system; for autoendoproteolytic cleavage activity in the active site. Residue serine 344 is the Schiff-base intermediate with substrate; via pyruvic acid; for decarboxylase activity of the active site. The residue at position 344 (serine 344) is a Pyruvic acid (Ser); by autocatalysis.

Belongs to the phosphatidylserine decarboxylase family. PSD-B subfamily. Eukaryotic type I sub-subfamily. In terms of assembly, heterodimer of a large membrane-associated beta subunit and a small pyruvoyl-containing alpha subunit. The cofactor is pyruvate. Is synthesized initially as an inactive proenzyme. Formation of the active enzyme involves a self-maturation process in which the active site pyruvoyl group is generated from an internal serine residue via an autocatalytic post-translational modification. Two non-identical subunits are generated from the proenzyme in this reaction, and the pyruvate is formed at the N-terminus of the alpha chain, which is derived from the carboxyl end of the proenzyme. The autoendoproteolytic cleavage occurs by a canonical serine protease mechanism, in which the side chain hydroxyl group of the serine supplies its oxygen atom to form the C-terminus of the beta chain, while the remainder of the serine residue undergoes an oxidative deamination to produce ammonia and the pyruvoyl prosthetic group on the alpha chain. During this reaction, the Ser that is part of the protease active site of the proenzyme becomes the pyruvoyl prosthetic group, which constitutes an essential element of the active site of the mature decarboxylase.

The protein resides in the mitochondrion inner membrane. It carries out the reaction a 1,2-diacyl-sn-glycero-3-phospho-L-serine + H(+) = a 1,2-diacyl-sn-glycero-3-phosphoethanolamine + CO2. It participates in phospholipid metabolism; phosphatidylethanolamine biosynthesis; phosphatidylethanolamine from CDP-diacylglycerol: step 2/2. Functionally, catalyzes the formation of phosphatidylethanolamine (PtdEtn) from phosphatidylserine (PtdSer). Plays a central role in phospholipid metabolism and in the interorganelle trafficking of phosphatidylserine. The sequence is that of Phosphatidylserine decarboxylase proenzyme, mitochondrial from Caenorhabditis elegans.